The sequence spans 190 residues: MVVEAYVKQTEALEKKNRIVELMLEREHASSVKSVLETLNGLPGVRMWSPFHKTSIDHLIADEASRQGFIAFPRAEHKRTGEEDLIWDPNAVDDFCRGDMHKWLEEMPNYCYYNCAGEGIGFARQRMALFIYALQRAYLPFEMKKVVVQTREDIESSMKLKASNAIFYMNFKAYGGPQCRGIVRKQVIED.

It belongs to the UPF0725 (EMB2204) family.

The polypeptide is UPF0725 protein At2g20625 (Arabidopsis thaliana (Mouse-ear cress)).